Reading from the N-terminus, the 506-residue chain is Photosystem II CP47 reaction center protein (506 aa).

A run of 6 helical transmembrane segments spans residues 21 to 36, 101 to 115, 140 to 156, 203 to 218, 237 to 252, and 457 to 472; these read SVHIMHTALVAGWAGS, ILFSGLCFLAAIWHW, GIHLFLSGLGCFGFGAF, IAAGTLGILAGLFHLS, VLSSSIAAVFFAAFVV, and SFALLFFFGHIWHGAR.

This sequence belongs to the PsbB/PsbC family. PsbB subfamily. In terms of assembly, PSII is composed of 1 copy each of membrane proteins PsbA, PsbB, PsbC, PsbD, PsbE, PsbF, PsbH, PsbI, PsbJ, PsbK, PsbL, PsbM, PsbT, PsbX, PsbY, PsbZ, Psb30/Ycf12, at least 3 peripheral proteins of the oxygen-evolving complex and a large number of cofactors. It forms dimeric complexes. The cofactor is Binds multiple chlorophylls. PSII binds additional chlorophylls, carotenoids and specific lipids..

The protein localises to the plastid. It localises to the chloroplast thylakoid membrane. Functionally, one of the components of the core complex of photosystem II (PSII). It binds chlorophyll and helps catalyze the primary light-induced photochemical processes of PSII. PSII is a light-driven water:plastoquinone oxidoreductase, using light energy to abstract electrons from H(2)O, generating O(2) and a proton gradient subsequently used for ATP formation. The protein is Photosystem II CP47 reaction center protein of Cucumis sativus (Cucumber).